A 351-amino-acid chain; its full sequence is tRNA pseudouridine synthase D (351 aa).

Asp96 functions as the Nucleophile in the catalytic mechanism. A TRUD domain is found at 174 to 304; it reads GAPNYFGPQR…MKPERRPLVA (131 aa). Residues 244 to 268 are disordered; that stretch reads VLPGEPEPSGAGPTGPLWGDGGTLA.

It belongs to the pseudouridine synthase TruD family.

It carries out the reaction uridine(13) in tRNA = pseudouridine(13) in tRNA. Responsible for synthesis of pseudouridine from uracil-13 in transfer RNAs. The polypeptide is tRNA pseudouridine synthase D (Marinobacter nauticus (strain ATCC 700491 / DSM 11845 / VT8) (Marinobacter aquaeolei)).